The following is a 176-amino-acid chain: METCRCPLSYLISFLLFLSHSETACRPLGKRPCRMQAFRIWDVNQKTFYLRNNQLVAGYLQGSNTKLEEKLDVVPVEPHAVFLGIHGGKLCLACVKSGDETRLQLEAVNITDLSKNKDQDKRFTFILSDSGPTTSFESAACPGWFLCTALEADRPVSLTNRPEEAMMVTKFYFQKE.

The signal sequence occupies residues 1–25 (METCRCPLSYLISFLLFLSHSETAC). A disulfide bond links cysteine 91 and cysteine 141. A glycan (N-linked (GlcNAc...) asparagine) is linked at asparagine 109.

It belongs to the IL-1 family.

It is found in the secreted. Functionally, anti-inflammatory antagonist of interleukin-1 family of proinflammatory cytokines such as interleukin-1beta/IL1B and interleukin-1alpha/IL1A. Protects from immune dysregulation and uncontrolled systemic inflammation triggered by IL1 for a range of innate stimulatory agents such as pathogens. The chain is Interleukin-1 receptor antagonist protein (IL1RN) from Canis lupus familiaris (Dog).